Here is a 116-residue protein sequence, read N- to C-terminus: Protein Wnt-5b (116 aa).

Ser-1 is lipidated: O-palmitoleoyl serine; by PORCN. Residues Asn-69 and Asn-83 are each glycosylated (N-linked (GlcNAc...) asparagine). A disulfide bridge connects residues Cys-82 and Cys-97.

It belongs to the Wnt family. In terms of processing, palmitoleoylation is required for efficient binding to frizzled receptors. Depalmitoleoylation leads to Wnt signaling pathway inhibition.

It localises to the secreted. Its subcellular location is the extracellular space. It is found in the extracellular matrix. Its function is as follows. Ligand for members of the frizzled family of seven transmembrane receptors. Probable developmental protein. May be a signaling molecule which affects the development of discrete regions of tissues. Is likely to signal over only few cell diameters. In Plestiodon skiltonianus (Western skink), this protein is Protein Wnt-5b (WNT-5B).